The following is a 129-amino-acid chain: Small ribosomal subunit protein uS11 (129 aa).

It belongs to the universal ribosomal protein uS11 family. Part of the 30S ribosomal subunit. Interacts with proteins S7 and S18. Binds to IF-3.

Its function is as follows. Located on the platform of the 30S subunit, it bridges several disparate RNA helices of the 16S rRNA. Forms part of the Shine-Dalgarno cleft in the 70S ribosome. This Bartonella tribocorum (strain CIP 105476 / IBS 506) protein is Small ribosomal subunit protein uS11.